Here is a 939-residue protein sequence, read N- to C-terminus: Isoleucine--tRNA ligase (939 aa).

Residues Pro-58 to His-68 carry the 'HIGH' region motif. Glu-562 is a binding site for L-isoleucyl-5'-AMP. The 'KMSKS' region motif lies at Lys-603 to Ser-607. Position 606 (Lys-606) interacts with ATP. Zn(2+)-binding residues include Cys-903, Cys-906, Cys-922, and Cys-925.

This sequence belongs to the class-I aminoacyl-tRNA synthetase family. IleS type 1 subfamily. In terms of assembly, monomer. It depends on Zn(2+) as a cofactor.

It is found in the cytoplasm. It carries out the reaction tRNA(Ile) + L-isoleucine + ATP = L-isoleucyl-tRNA(Ile) + AMP + diphosphate. Its function is as follows. Catalyzes the attachment of isoleucine to tRNA(Ile). As IleRS can inadvertently accommodate and process structurally similar amino acids such as valine, to avoid such errors it has two additional distinct tRNA(Ile)-dependent editing activities. One activity is designated as 'pretransfer' editing and involves the hydrolysis of activated Val-AMP. The other activity is designated 'posttransfer' editing and involves deacylation of mischarged Val-tRNA(Ile). The polypeptide is Isoleucine--tRNA ligase (Buchnera aphidicola subsp. Baizongia pistaciae (strain Bp)).